The primary structure comprises 204 residues: Large ribosomal subunit protein bL25 (204 aa).

Belongs to the bacterial ribosomal protein bL25 family. CTC subfamily. In terms of assembly, part of the 50S ribosomal subunit; part of the 5S rRNA/L5/L18/L25 subcomplex. Contacts the 5S rRNA. Binds to the 5S rRNA independently of L5 and L18.

This is one of the proteins that binds to the 5S RNA in the ribosome where it forms part of the central protuberance. The chain is Large ribosomal subunit protein bL25 from Burkholderia mallei (strain NCTC 10247).